The sequence spans 509 residues: MYCTLRFPLPLHIPQTRTMTSCQPKRRRVEHLRCSAQPSSIREDDEDADDRRVGVERRISIVVERYGNGTSKRYFLDDDDSPLQGILEERETKPDNNSQSSNSSETNILWLPDVVRDFVFPSGFPGSVSDDYLDYMLWQFPTNITGWICNVLVTSSLLKAVGVGSFSGTSAAATAAASAAAIRWVSKDGIGALGRLLIGGRFGSLFDDDPKQWRMYADFIGSAGSFFDLATQLYPSQFLLLASTGNLAKAVARGLRDPSFRVIQNHFAISGNLGEVAAKEEVWEVAAQLIGLGFGILIIDTPGLVKSFPFVLLTWTSIRLVHLWLRYQSLAVLQFNTVNLKRARIIVESHVVHSVVPGYVDCNKRENILLWQRFMKPRIIFGVSLEELSGLEKSVSKVKALLKMYTKEKYILTLNKLNKDTEFSVSFKVNATSRDVLRCLWQAYWLEENMEESFKDKDSVFHWLKQSLSEMDNKFDDFLFKLDTAGWNLRESNLKVPNQVLIDQESIPF.

The interval 22 to 49 (CQPKRRRVEHLRCSAQPSSIREDDEDAD) is disordered.

Belongs to the RUS1 family.

This Arabidopsis thaliana (Mouse-ear cress) protein is Protein root UVB sensitive 5.